The primary structure comprises 177 residues: Dual-action ribosomal maturation protein DarP (177 aa).

Belongs to the DarP family.

The protein localises to the cytoplasm. Its function is as follows. Member of a network of 50S ribosomal subunit biogenesis factors which assembles along the 30S-50S interface, preventing incorrect 23S rRNA structures from forming. Promotes peptidyl transferase center (PTC) maturation. In Glaesserella parasuis serovar 5 (strain SH0165) (Haemophilus parasuis), this protein is Dual-action ribosomal maturation protein DarP.